The primary structure comprises 443 residues: Mitochondrial enolase superfamily member 1 (443 aa).

Residues 24 to 26 (GSD) and Tyr-34 contribute to the substrate site. Ser-148 is subject to Phosphoserine. Residue Lys-220 coordinates substrate. Residue Lys-222 is the Proton donor/acceptor of the active site. Asp-250 is a Mg(2+) binding site. Residues Asn-252, Glu-276, Glu-305, 355–357 (HAG), and Glu-386 each bind substrate. Residues Glu-276 and Glu-305 each coordinate Mg(2+). The active site involves His-355.

It belongs to the mandelate racemase/muconate lactonizing enzyme family. ENOSF1 subfamily. Mg(2+) is required as a cofactor. Post-translationally, could be sumoylated.

It localises to the mitochondrion. The catalysed reaction is L-fuconate = 2-dehydro-3-deoxy-L-fuconate + H2O. Its function is as follows. Plays a role in the catabolism of L-fucose, a sugar that is part of the carbohydrates that are attached to cellular glycoproteins. Catalyzes the dehydration of L-fuconate to 2-keto-3-deoxy-L-fuconate by the abstraction of the 2-proton to generate an enediolate intermediate that is stabilized by the magnesium ion. May down-regulate thymidylate synthase activity, possibly already at the RNA level, by promoting the degradation of TYMS mRNA via an antisense RNA-based mechanism. The chain is Mitochondrial enolase superfamily member 1 (ENOSF1) from Bos taurus (Bovine).